We begin with the raw amino-acid sequence, 96 residues long: Small ribosomal subunit protein bS6 (96 aa).

The protein belongs to the bacterial ribosomal protein bS6 family.

In terms of biological role, binds together with bS18 to 16S ribosomal RNA. The sequence is that of Small ribosomal subunit protein bS6 from Natranaerobius thermophilus (strain ATCC BAA-1301 / DSM 18059 / JW/NM-WN-LF).